Reading from the N-terminus, the 466-residue chain is Ribulose bisphosphate carboxylase large chain (466 aa).

Lysine 4 bears the N6,N6,N6-trimethyllysine mark. Residues asparagine 113 and threonine 163 each contribute to the substrate site. The active-site Proton acceptor is the lysine 165. Lysine 167 lines the substrate pocket. Mg(2+) is bound by residues lysine 191, aspartate 193, and glutamate 194. N6-carboxylysine is present on lysine 191. Residue histidine 284 is the Proton acceptor of the active site. Positions 285, 317, and 369 each coordinate substrate.

Belongs to the RuBisCO large chain family. Type I subfamily. As to quaternary structure, heterohexadecamer of 8 large chains and 8 small chains; disulfide-linked. The disulfide link is formed within the large subunit homodimers. Requires Mg(2+) as cofactor. Post-translationally, the disulfide bond which can form in the large chain dimeric partners within the hexadecamer appears to be associated with oxidative stress and protein turnover.

Its subcellular location is the plastid. It localises to the chloroplast. The catalysed reaction is 2 (2R)-3-phosphoglycerate + 2 H(+) = D-ribulose 1,5-bisphosphate + CO2 + H2O. It carries out the reaction D-ribulose 1,5-bisphosphate + O2 = 2-phosphoglycolate + (2R)-3-phosphoglycerate + 2 H(+). RuBisCO catalyzes two reactions: the carboxylation of D-ribulose 1,5-bisphosphate, the primary event in carbon dioxide fixation, as well as the oxidative fragmentation of the pentose substrate in the photorespiration process. Both reactions occur simultaneously and in competition at the same active site. The polypeptide is Ribulose bisphosphate carboxylase large chain (Barleria prionitis (Porcupine flower)).